Consider the following 105-residue polypeptide: uncharacterized protein (105 aa).

Disordered stretches follow at residues 29-55 (HTRV…TDES) and 72-105 (EQRG…RSGR). Residues 72–81 (EQRGDRRAVR) show a composition bias toward basic and acidic residues.

This is an uncharacterized protein from Streptomyces coelicolor (strain ATCC BAA-471 / A3(2) / M145).